The following is a 241-amino-acid chain: Large ribosomal subunit protein uL2 (241 aa).

Residues 201–241 (VDHPHGGGNRQHPGRPTTVSRHAPPGRKVGSIAAKRTGLKR) form a disordered region.

This sequence belongs to the universal ribosomal protein uL2 family. Part of the 50S ribosomal subunit. Forms a bridge to the 30S subunit in the 70S ribosome.

One of the primary rRNA binding proteins. Required for association of the 30S and 50S subunits to form the 70S ribosome, for tRNA binding and peptide bond formation. It has been suggested to have peptidyltransferase activity; this is somewhat controversial. Makes several contacts with the 16S rRNA in the 70S ribosome. This Methanobrevibacter smithii (strain ATCC 35061 / DSM 861 / OCM 144 / PS) protein is Large ribosomal subunit protein uL2.